A 145-amino-acid chain; its full sequence is Large ribosomal subunit protein uL15 (145 aa).

The interval Met1–Ser42 is disordered. Residues Arg13 to Gly26 show a composition bias toward basic residues.

Belongs to the universal ribosomal protein uL15 family. In terms of assembly, part of the 50S ribosomal subunit.

Functionally, binds to the 23S rRNA. The sequence is that of Large ribosomal subunit protein uL15 from Metamycoplasma arthritidis (strain 158L3-1) (Mycoplasma arthritidis).